The following is a 94-amino-acid chain: Ferredoxin-like protein (94 aa).

2 consecutive 4Fe-4S ferredoxin-type domains span residues 20–52 (PHIR…RETN) and 53–83 (GKVT…WEWP).

This sequence to ferredoxins from P.putida and C.tartarivorum, ferredoxin I from A.vinelandii, ferredoxin II from D.desulfuricans.

Functionally, could be a 3Fe-4S cluster-containing protein. The polypeptide is Ferredoxin-like protein (fixX) (Azotobacter vinelandii).